The chain runs to 496 residues: UDP-N-acetylmuramoylalanine--D-glutamate ligase (496 aa).

G130–T136 is a binding site for ATP.

This sequence belongs to the MurCDEF family. Interacts with PknA. Post-translationally, phosphorylated by PknA.

The protein resides in the cytoplasm. It carries out the reaction UDP-N-acetyl-alpha-D-muramoyl-L-alanine + D-glutamate + ATP = UDP-N-acetyl-alpha-D-muramoyl-L-alanyl-D-glutamate + ADP + phosphate + H(+). It participates in cell wall biogenesis; peptidoglycan biosynthesis. Cell wall formation. Catalyzes the addition of glutamate to the nucleotide precursor UDP-N-acetylmuramoyl-L-alanine (UMA). The polypeptide is UDP-N-acetylmuramoylalanine--D-glutamate ligase (Mycobacterium tuberculosis (strain ATCC 25177 / H37Ra)).